Here is a 371-residue protein sequence, read N- to C-terminus: Queuine tRNA-ribosyltransferase (371 aa).

The active-site Proton acceptor is Asp90. Substrate-binding positions include 90 to 94 (DSGGF), Asp144, Gln188, and Gly215. Residues 246 to 252 (GVGTPED) are RNA binding. Asp265 (nucleophile) is an active-site residue. The RNA binding; important for wobble base 34 recognition stretch occupies residues 270–274 (TRNAR). Zn(2+)-binding residues include Cys303, Cys305, Cys308, and His334.

This sequence belongs to the queuine tRNA-ribosyltransferase family. In terms of assembly, homodimer. Within each dimer, one monomer is responsible for RNA recognition and catalysis, while the other monomer binds to the replacement base PreQ1. Zn(2+) is required as a cofactor.

The enzyme catalyses 7-aminomethyl-7-carbaguanine + guanosine(34) in tRNA = 7-aminomethyl-7-carbaguanosine(34) in tRNA + guanine. The protein operates within tRNA modification; tRNA-queuosine biosynthesis. Catalyzes the base-exchange of a guanine (G) residue with the queuine precursor 7-aminomethyl-7-deazaguanine (PreQ1) at position 34 (anticodon wobble position) in tRNAs with GU(N) anticodons (tRNA-Asp, -Asn, -His and -Tyr). Catalysis occurs through a double-displacement mechanism. The nucleophile active site attacks the C1' of nucleotide 34 to detach the guanine base from the RNA, forming a covalent enzyme-RNA intermediate. The proton acceptor active site deprotonates the incoming PreQ1, allowing a nucleophilic attack on the C1' of the ribose to form the product. After dissociation, two additional enzymatic reactions on the tRNA convert PreQ1 to queuine (Q), resulting in the hypermodified nucleoside queuosine (7-(((4,5-cis-dihydroxy-2-cyclopenten-1-yl)amino)methyl)-7-deazaguanosine). This is Queuine tRNA-ribosyltransferase from Neisseria meningitidis serogroup C (strain 053442).